We begin with the raw amino-acid sequence, 148 residues long: SsrA-binding protein (148 aa).

The protein belongs to the SmpB family.

The protein localises to the cytoplasm. Required for rescue of stalled ribosomes mediated by trans-translation. Binds to transfer-messenger RNA (tmRNA), required for stable association of tmRNA with ribosomes. tmRNA and SmpB together mimic tRNA shape, replacing the anticodon stem-loop with SmpB. tmRNA is encoded by the ssrA gene; the 2 termini fold to resemble tRNA(Ala) and it encodes a 'tag peptide', a short internal open reading frame. During trans-translation Ala-aminoacylated tmRNA acts like a tRNA, entering the A-site of stalled ribosomes, displacing the stalled mRNA. The ribosome then switches to translate the ORF on the tmRNA; the nascent peptide is terminated with the 'tag peptide' encoded by the tmRNA and targeted for degradation. The ribosome is freed to recommence translation, which seems to be the essential function of trans-translation. In Pseudothermotoga lettingae (strain ATCC BAA-301 / DSM 14385 / NBRC 107922 / TMO) (Thermotoga lettingae), this protein is SsrA-binding protein.